Here is a 1321-residue protein sequence, read N- to C-terminus: Bile salt export pump (1321 aa).

The Cytoplasmic portion of the chain corresponds to 1-62 (MSDSVILRSV…FSSSKDIWLM (62 aa)). One can recognise an ABC transmembrane type-1 1 domain in the interval 62–385 (MLMGGVCALL…ASSCLEIFST (324 aa)). A helical membrane pass occupies residues 63–83 (LMGGVCALLHGMAQPGILIIF). Residues 84-147 (GIMTDIFIKY…MIKFSGIYAG (64 aa)) are Extracellular-facing. Asparagine 109, asparagine 116, asparagine 122, and asparagine 125 each carry an N-linked (GlcNAc...) asparagine glycan. A helical membrane pass occupies residues 148-168 (VGMTVLILGYFQIRLWVITGA). The Cytoplasmic portion of the chain corresponds to 169–215 (RQIRRMRKIYFRRIMRMEIGWFDCTSVGELNSRFADDIEKINDAIAD). The chain crosses the membrane as a helical span at residues 216 to 236 (QLAHFLQRMSTAMCGLLLGFY). Over 237 to 240 (RGWK) the chain is Extracellular. The helical transmembrane segment at 241 to 261 (LTLVILAVSPLIGIGAAVIGL) threads the bilayer. Topologically, residues 262-319 (SIAKFTELELKAYAKAGSIADEVLSSIRTVAAFGGENKEVERYEKNLVFAQRWGIWKG) are cytoplasmic. Residues 320-340 (MVMGFFTGYMWCLIFFCYALA) traverse the membrane as a helical segment. Over 341–353 (FWYGSTLVLDEEE) the chain is Extracellular. The helical transmembrane segment at 354 to 374 (YTPGTLVQIFLCVILAAMNIG) threads the bilayer. Topologically, residues 375-755 (HASSCLEIFS…KYNIPEWHYI (381 aa)) are cytoplasmic. The ABC transporter 1 domain occupies 420-656 (IEFHNVTFHY…KGVYFMLVTL (237 aa)). 455–462 (GSSGAGKS) serves as a coordination point for ATP. Position 586 is a phosphothreonine (threonine 586). The residue at position 587 (serine 587) is a Phosphoserine. An interaction with HAX1 region spans residues 651-674 (FMLVTLQSQGDNAHKETSIMGKDA). Phosphoserine occurs at positions 692, 703, and 706. An ABC transmembrane type-1 2 domain is found at 755–1043 (ILVGSLSAAI…TFSYTPSYAK (289 aa)). Residues 756–776 (LVGSLSAAINGAVTPIYSLLF) traverse the membrane as a helical segment. Over 777–794 (SQLLGTFSLLDKEQQRSE) the chain is Extracellular. A helical membrane pass occupies residues 795–815 (IHSMCLFFVILGCVSIFTQFL). Residues 816-869 (QGYTFAKSGELLTKRLRKFGFKAMLGQDIGWFDDLRNNPGVLTTRLATDASQVQ) are Cytoplasmic-facing. The next 2 membrane-spanning stretches (helical) occupy residues 870-890 (GATG…IAAL) and 891-911 (LIAF…FPFL). At 912–979 (ALSGAVQTKM…SYKTAVRKAN (68 aa)) the chain is on the cytoplasmic side. Residues 980–1000 (IYGLCFAFSQGIAFLANSAAY) form a helical membrane-spanning segment. At 1001–1011 (RYGGYLIAYEG) the chain is on the extracellular side. Residues 1012 to 1032 (LGFSHVFRVVSSVALSATAVG) form a helical membrane-spanning segment. The Cytoplasmic segment spans residues 1033 to 1321 (RTFSYTPSYA…KLVITGAPIS (289 aa)). Positions 1078–1316 (IDFIDCKFTY…KGAYYKLVIT (239 aa)) constitute an ABC transporter 2 domain. ATP is bound at residue 1113–1120 (GSSGCGKS). Position 1321 is a phosphoserine (serine 1321).

The protein belongs to the ABC transporter superfamily. ABCB family. Multidrug resistance exporter (TC 3.A.1.201) subfamily. In terms of assembly, interacts with HAX1. Interacts with the adapter protein complex 2 (AP-2) throught AP2A2 or AP2A1; this interaction regulates cell membrane expression of ABCB11 through its internalization in a clathrin-dependent manner and its subsequent degradation. Post-translationally, ubiquitinated; short-chain ubiquitination regulates cell-Surface expression of ABCB11. In terms of processing, N-glycosylated. In terms of tissue distribution, expressed predominantly, if not exclusively in the liver, where it was further localized to the canalicular microvilli and to subcanalicular vesicles of the hepatocytes by in situ.

The protein resides in the apical cell membrane. Its subcellular location is the recycling endosome membrane. The protein localises to the endosome. It is found in the cell membrane. It carries out the reaction cholate(in) + ATP + H2O = cholate(out) + ADP + phosphate + H(+). It catalyses the reaction taurocholate(in) + ATP + H2O = taurocholate(out) + ADP + phosphate + H(+). The catalysed reaction is glycocholate(in) + ATP + H2O = glycocholate(out) + ADP + phosphate + H(+). The enzyme catalyses glycochenodeoxycholate(in) + ATP + H2O = glycochenodeoxycholate(out) + ADP + phosphate + H(+). It carries out the reaction taurochenodeoxycholate(in) + ATP + H2O = taurochenodeoxycholate(out) + ADP + phosphate + H(+). It catalyses the reaction glycoursodeoxycholate(in) + ATP + H2O = glycoursodeoxycholate(out) + ADP + phosphate + H(+). The catalysed reaction is tauroursodeoxycholate(in) + ATP + H2O = tauroursodeoxycholate(out) + ADP + phosphate + H(+). The enzyme catalyses taurodeoxycholate(in) + ATP + H2O = taurodeoxycholate(out) + ADP + phosphate + H(+). It carries out the reaction pravastatin(in) + ATP + H2O = pravastatin(out) + ADP + phosphate + H(+). Its activity is regulated as follows. The uptake of taurocholate is inhibited by taurolithocholate sulfate with an IC(50) of 52.9 uM. Pravastatin competitively inhibits the transport of taurocholic acid. Cyclosporin A, glibenclamide, rifampicin and troglitazonestrongly competitively inhibit the transport activity of taurocholate. The canalicular transport activity of taurocholate is strongly dependent on canalicular membrane cholesterol content. The uptake of taurocholate is increased by short- and medium-chain fatty acids. Cholesterol increases transport capacity of taurocholate without affecting the affinity for the substrate. Its function is as follows. Catalyzes the transport of the major hydrophobic bile salts, such as taurine and glycine-conjugated cholic acid across the canalicular membrane of hepatocytes in an ATP-dependent manner, therefore participates in hepatic bile acid homeostasis and consequently to lipid homeostasis through regulation of biliary lipid secretion in a bile salts dependent manner. Transports taurine-conjugated bile salts more rapidly than glycine-conjugated bile salts. Also transports non-bile acid compounds, such as pravastatin and fexofenadine in an ATP-dependent manner and may be involved in their biliary excretion. The chain is Bile salt export pump from Rattus norvegicus (Rat).